We begin with the raw amino-acid sequence, 120 residues long: Nascent polypeptide-associated complex protein (120 aa).

Positions 12-80 (GMNPAKMKQM…VKEVPKSLEI (69 aa)) constitute an NAC-A/B domain.

Belongs to the NAC-alpha family. In terms of assembly, homodimer. Interacts with the ribosome. Binds ribosomal RNA.

Functionally, contacts the emerging nascent chain on the ribosome. This chain is Nascent polypeptide-associated complex protein, found in Methanosarcina mazei (strain ATCC BAA-159 / DSM 3647 / Goe1 / Go1 / JCM 11833 / OCM 88) (Methanosarcina frisia).